Reading from the N-terminus, the 240-residue chain is Proteasome subunit alpha (240 aa).

This sequence belongs to the peptidase T1A family. In terms of assembly, the 20S proteasome core is composed of 14 alpha and 14 beta subunits that assemble into four stacked heptameric rings, resulting in a barrel-shaped structure. The two inner rings, each composed of seven catalytic beta subunits, are sandwiched by two outer rings, each composed of seven alpha subunits. The catalytic chamber with the active sites is on the inside of the barrel. Has a gated structure, the ends of the cylinder being occluded by the N-termini of the alpha-subunits. Is capped at one or both ends by the proteasome regulatory ATPase, PAN.

The protein resides in the cytoplasm. Its activity is regulated as follows. The formation of the proteasomal ATPase PAN-20S proteasome complex, via the docking of the C-termini of PAN into the intersubunit pockets in the alpha-rings, triggers opening of the gate for substrate entry. Interconversion between the open-gate and close-gate conformations leads to a dynamic regulation of the 20S proteasome proteolysis activity. Its function is as follows. Component of the proteasome core, a large protease complex with broad specificity involved in protein degradation. The protein is Proteasome subunit alpha of Methanoculleus marisnigri (strain ATCC 35101 / DSM 1498 / JR1).